The chain runs to 334 residues: UDP-N-acetylenolpyruvoylglucosamine reductase (334 aa).

Positions 16–186 (INVFAKKIII…LSVGIKLPKT (171 aa)) constitute an FAD-binding PCMH-type domain. Arginine 162 is an active-site residue. Serine 232 (proton donor) is an active-site residue. Glutamate 329 is a catalytic residue.

This sequence belongs to the MurB family. The cofactor is FAD.

The protein resides in the cytoplasm. The catalysed reaction is UDP-N-acetyl-alpha-D-muramate + NADP(+) = UDP-N-acetyl-3-O-(1-carboxyvinyl)-alpha-D-glucosamine + NADPH + H(+). The protein operates within cell wall biogenesis; peptidoglycan biosynthesis. Its function is as follows. Cell wall formation. This is UDP-N-acetylenolpyruvoylglucosamine reductase from Buchnera aphidicola subsp. Baizongia pistaciae (strain Bp).